Here is an 88-residue protein sequence, read N- to C-terminus: Alpha-latrotoxin associated low molecular weight protein 2 (88 aa).

Residues Met1 to Gly19 form the signal peptide. Cystine bridges form between Cys30-Cys66, Cys46-Cys62, and Cys49-Cys75.

The protein belongs to the arthropod CHH/MIH/GIH/VIH hormone family. As to expression, expressed by the venom gland.

The protein localises to the secreted. May increase the toxicity of alpha-latrotoxin and/or other venom components. Is non-toxic to mice and to the cockroach Periplaneta americana. This Latrodectus geometricus (Brown widow spider) protein is Alpha-latrotoxin associated low molecular weight protein 2.